The sequence spans 427 residues: Enolase (427 aa).

Residue Gln-163 participates in (2R)-2-phosphoglycerate binding. The active-site Proton donor is the Glu-205. Residues Asp-242, Glu-285, and Asp-312 each coordinate Mg(2+). 4 residues coordinate (2R)-2-phosphoglycerate: Lys-337, Arg-366, Ser-367, and Lys-388. Lys-337 acts as the Proton acceptor in catalysis.

It belongs to the enolase family. Mg(2+) is required as a cofactor.

The protein localises to the cytoplasm. The protein resides in the secreted. It localises to the cell surface. It carries out the reaction (2R)-2-phosphoglycerate = phosphoenolpyruvate + H2O. Its pathway is carbohydrate degradation; glycolysis; pyruvate from D-glyceraldehyde 3-phosphate: step 4/5. Functionally, catalyzes the reversible conversion of 2-phosphoglycerate (2-PG) into phosphoenolpyruvate (PEP). It is essential for the degradation of carbohydrates via glycolysis. The polypeptide is Enolase (Xanthobacter autotrophicus (strain ATCC BAA-1158 / Py2)).